We begin with the raw amino-acid sequence, 820 residues long: TORTIFOLIA1-like protein 2 (820 aa).

HEAT repeat units lie at residues 61 to 98 (DKVSCFLSCILDTDSEQKSAVRKECIRLMGTLARFHEG), 102 to 139 (PYLGKMVSSIVKRLKDPDSVVRDACIETMGVLASKMSC), 146 to 183 (GVFVSLVKPLFEAIGDQNKYVQSGAALCLARVIDSSPE), 187 to 224 (AIIQRMLMRTVKLLNNSHFIAKPAVIELNRSIILAGGA), and 228 to 265 (SVLSSAMSSFQDALKNKDWTTRKAASVALMEIAATGEK). Low complexity predominate over residues 304–321 (PGSDSPEPSETESSVKES). Disordered regions lie at residues 304–325 (PGSDSPEPSETESSVKESYNGA), 357–377 (PVSARQPPTRYNDDPRKSNQD), and 584–644 (GSTI…GKTG). Over residues 367–377 (YNDDPRKSNQD) the composition is skewed to basic and acidic residues. A compositionally biased stretch (polar residues) spans 584–613 (GSTISPRLSSCTSRTSTDIRNRQSTLSTSK).

The chain is TORTIFOLIA1-like protein 2 from Arabidopsis thaliana (Mouse-ear cress).